A 319-amino-acid polypeptide reads, in one-letter code: Lambda-crystallin homolog (319 aa).

Residue Ala-2 is modified to N-acetylalanine. Phosphoserine is present on Ser-3. Residues 16-17 (LI), Asp-36, Glu-97, and Lys-102 contribute to the NAD(+) site.

The protein belongs to the 3-hydroxyacyl-CoA dehydrogenase family. In terms of assembly, homodimer.

Its subcellular location is the cytoplasm. The enzyme catalyses L-gulonate + NAD(+) = 3-dehydro-L-gulonate + NADH + H(+). Inhibited by malonate. Has high L-gulonate 3-dehydrogenase activity. It also exhibits low dehydrogenase activity toward L-3-hydroxybutyrate (HBA) and L-threonate. In Rattus norvegicus (Rat), this protein is Lambda-crystallin homolog (Cryl1).